A 441-amino-acid polypeptide reads, in one-letter code: tRNA-2-methylthio-N(6)-dimethylallyladenosine synthase (441 aa).

In terms of domain architecture, MTTase N-terminal spans 3 to 119 (KKVSIRTFGC…LPGLIRNAFQ (117 aa)). Residues cysteine 12, cysteine 48, cysteine 82, cysteine 155, cysteine 159, and cysteine 162 each coordinate [4Fe-4S] cluster. A Radical SAM core domain is found at 141–371 (RSGSISAFIP…IDLQSGISGE (231 aa)). In terms of domain architecture, TRAM spans 374–437 (GNDVGSVQEV…QATLIGRCQD (64 aa)).

This sequence belongs to the methylthiotransferase family. MiaB subfamily. As to quaternary structure, monomer. The cofactor is [4Fe-4S] cluster.

It localises to the cytoplasm. The enzyme catalyses N(6)-dimethylallyladenosine(37) in tRNA + (sulfur carrier)-SH + AH2 + 2 S-adenosyl-L-methionine = 2-methylsulfanyl-N(6)-dimethylallyladenosine(37) in tRNA + (sulfur carrier)-H + 5'-deoxyadenosine + L-methionine + A + S-adenosyl-L-homocysteine + 2 H(+). Catalyzes the methylthiolation of N6-(dimethylallyl)adenosine (i(6)A), leading to the formation of 2-methylthio-N6-(dimethylallyl)adenosine (ms(2)i(6)A) at position 37 in tRNAs that read codons beginning with uridine. The chain is tRNA-2-methylthio-N(6)-dimethylallyladenosine synthase from Prosthecochloris aestuarii (strain DSM 271 / SK 413).